A 315-amino-acid polypeptide reads, in one-letter code: Olfactory receptor 2V1 (315 aa).

Helical transmembrane passes span 31 to 51 (TVMLVFTVALCGNVLLILLIY), 59 to 79 (PMYFFLSQLSLMDLMLVCNIV), 100 to 120 (IQIGFFVSLVGSEGLLLGLMA), 145 to 165 (IAGSSWAFGILDGIIQMVAAM), 196 to 216 (FDTLLFACCVFMLLLPFSIIV), 239 to 259 (LATCSSHLTAVSLFYGAAMFI), and 273 to 293 (KVVSIFYTVLTPMLNPLIYSL). Residues cysteine 98 and cysteine 180 are joined by a disulfide bond.

This sequence belongs to the G-protein coupled receptor 1 family.

It localises to the cell membrane. Its function is as follows. Odorant receptor. Activated by (+) and (-)-limonene. In Mus musculus (Mouse), this protein is Olfactory receptor 2V1.